The chain runs to 143 residues: Ribosome-binding factor A (143 aa).

Residues 116–128 are compositionally biased toward basic and acidic residues; that stretch reads SDDEAKQKQHGDQ. Residues 116–143 are disordered; it reads SDDEAKQKQHGDQQDVSQSSDDKSEGED.

The protein belongs to the RbfA family. As to quaternary structure, monomer. Binds 30S ribosomal subunits, but not 50S ribosomal subunits or 70S ribosomes.

The protein localises to the cytoplasm. Functionally, one of several proteins that assist in the late maturation steps of the functional core of the 30S ribosomal subunit. Associates with free 30S ribosomal subunits (but not with 30S subunits that are part of 70S ribosomes or polysomes). Required for efficient processing of 16S rRNA. May interact with the 5'-terminal helix region of 16S rRNA. The chain is Ribosome-binding factor A from Shewanella sediminis (strain HAW-EB3).